Consider the following 411-residue polypeptide: Receptor GIN3 (411 aa).

The Extracellular segment spans residues 1 to 99 (MSGFVAGEEA…LLPILPHPRN (99 aa)). Residues 100-120 (IPIIVPLFCVFTVMTSLAVGL) traverse the membrane as a helical segment. Over 121-134 (RLWSRQKVAGGIRS) the chain is Cytoplasmic. The chain crosses the membrane as a helical span at residues 135-155 (FDWLALAGFGLTIIYGAVSVY). At 156 to 181 (HSKVSGPYQAFYDRTWDQMKENYKVY) the chain is on the extracellular side. The helical transmembrane segment at 182 to 202 (LVLTIMYPFIMGLIKISLLLF) threads the bilayer. At 203 to 227 (YYRVATLNYVQWAVYATGSLTIANS) the chain is on the cytoplasmic side. Residues 228 to 248 (IAAIITHCLAFMPIDFWNHFL) traverse the membrane as a helical segment. At 249–262 (QSPFKFNSRTPMLV) the chain is on the extracellular side. Residues 263–283 (FGAVYILTDVAILIIPMPMVF) traverse the membrane as a helical segment. Residues 284–292 (QLKLYPREK) are Cytoplasmic-facing. A helical membrane pass occupies residues 293-313 (VIAVIAFSLGGVACVASGFRI). Residues 314 to 328 (WAIDEFQNYSGKNSS) are Extracellular-facing. 2 N-linked (GlcNAc...) asparagine glycosylation sites follow: Asn-321 and Asn-326. Residues 329 to 349 (GLMIDAWTMIELNLTLICASA) traverse the membrane as a helical segment. Residues 350–411 (PAIRALAIHY…QSPVIPKEVV (62 aa)) are Cytoplasmic-facing. A disordered region spans residues 371–411 (FSSSGATRGSKSAGSSGKSKTPESEKSMQVSQSPVIPKEVV). A compositionally biased stretch (low complexity) spans 372 to 389 (SSSGATRGSKSAGSSGKS).

It belongs to the SAT4 family. In terms of assembly, interacts with guanine nucleotide-binding protein alpha GPA2; to activate adenylate cyclase and positively regulate nematode trap formation.

It localises to the cell membrane. In terms of biological role, receptor that senses nematode-derived signals at the cell surface and signals via adenylate cyclase to positively regulate trap formation for nematode capture. This chain is Receptor GIN3, found in Arthrobotrys oligospora (strain ATCC 24927 / CBS 115.81 / DSM 1491) (Nematode-trapping fungus).